Consider the following 70-residue polypeptide: uncharacterized protein (70 aa).

A helical transmembrane segment spans residues 4–24 (VKTIAMLAMLVIVAALIYMGY).

The protein localises to the host membrane. This is an uncharacterized protein from Dryophytes versicolor (chameleon treefrog).